The sequence spans 284 residues: Shikimate dehydrogenase (NADP(+)) (284 aa).

Residues 20–22 (SIS) and Ser-67 contribute to the shikimate site. Lys-71 serves as the catalytic Proton acceptor. Residue Asp-83 participates in NADP(+) binding. Residues Asn-92 and Asp-107 each contribute to the shikimate site. NADP(+) contacts are provided by residues 129–133 (GAGGA) and Ile-227. Position 229 (Tyr-229) interacts with shikimate. Gly-250 serves as a coordination point for NADP(+).

It belongs to the shikimate dehydrogenase family. As to quaternary structure, homodimer.

It carries out the reaction shikimate + NADP(+) = 3-dehydroshikimate + NADPH + H(+). Its pathway is metabolic intermediate biosynthesis; chorismate biosynthesis; chorismate from D-erythrose 4-phosphate and phosphoenolpyruvate: step 4/7. Involved in the biosynthesis of the chorismate, which leads to the biosynthesis of aromatic amino acids. Catalyzes the reversible NADPH linked reduction of 3-dehydroshikimate (DHSA) to yield shikimate (SA). The polypeptide is Shikimate dehydrogenase (NADP(+)) (Streptococcus pneumoniae (strain P1031)).